The following is a 406-amino-acid chain: 2,3-bisphosphoglycerate-independent phosphoglycerate mutase (406 aa).

The protein belongs to the BPG-independent phosphoglycerate mutase family. A-PGAM subfamily.

It catalyses the reaction (2R)-2-phosphoglycerate = (2R)-3-phosphoglycerate. It participates in carbohydrate degradation; glycolysis; pyruvate from D-glyceraldehyde 3-phosphate: step 3/5. In terms of biological role, catalyzes the interconversion of 2-phosphoglycerate and 3-phosphoglycerate. The sequence is that of 2,3-bisphosphoglycerate-independent phosphoglycerate mutase from Methanococcus maripaludis (strain C7 / ATCC BAA-1331).